A 291-amino-acid chain; its full sequence is Bis(5'-nucleosyl)-tetraphosphatase, symmetrical (291 aa).

The protein belongs to the Ap4A hydrolase family.

It catalyses the reaction P(1),P(4)-bis(5'-adenosyl) tetraphosphate + H2O = 2 ADP + 2 H(+). Functionally, hydrolyzes diadenosine 5',5'''-P1,P4-tetraphosphate to yield ADP. This chain is Bis(5'-nucleosyl)-tetraphosphatase, symmetrical, found in Coxiella burnetii (strain RSA 331 / Henzerling II).